A 712-amino-acid polypeptide reads, in one-letter code: Amino-acid acetyltransferase, mitochondrial (712 aa).

The transit peptide at 1–47 (MFVRTCRSSCNAWTNATSTTQAGSLLPPNAHRSVVLTLSLQACSART) directs the protein to the mitochondrion. The tract at residues 55-99 (FASTTSQSKRQEAEAEEKRQVSPRLGPSAPRSSYPSSAEARQKRD) is disordered. Positions 63-74 (KRQEAEAEEKRQ) are enriched in basic and acidic residues. The segment covering 81–93 (PSAPRSSYPSSAE) has biased composition (low complexity). An N-acetyltransferase domain is found at 534–702 (GVPRLRLTDT…YEDVCRNIAP (169 aa)).

Belongs to the acetyltransferase family.

Its subcellular location is the mitochondrion. It catalyses the reaction L-glutamate + acetyl-CoA = N-acetyl-L-glutamate + CoA + H(+). It participates in amino-acid biosynthesis; L-arginine biosynthesis; N(2)-acetyl-L-ornithine from L-glutamate: step 1/4. With respect to regulation, inhibited by arginine. Functionally, N-acetylglutamate synthase involved in arginine biosynthesis. The chain is Amino-acid acetyltransferase, mitochondrial (arg-14) from Neurospora crassa (strain ATCC 24698 / 74-OR23-1A / CBS 708.71 / DSM 1257 / FGSC 987).